The primary structure comprises 773 residues: C-Maf-inducing protein (773 aa).

Residues 1 to 30 (MDVTSSSGGGGDPRQIEETKPLLGGDVSAP) are disordered. The PH domain maps to 54-163 (LLQEGDIQVC…HSLQWKKKIY (110 aa)). Phosphoserine is present on residues S349, S377, S382, and S660. 4 LRR repeats span residues 663–686 (NLEN…IKLP), 687–707 (SLKQ…RLLS), 712–732 (MLQV…LALS), and 736–756 (SLCS…EDLK).

In terms of assembly, interacts with FLNA. As to expression, isoform 1 is expressed in peripheral blood mononuclear cells and kidney. Lower expression in brain and liver. Expression is down-regulated in activated cells. Isoform 2 is expressed in lymphocyte precursors, however, expression shuts down during maturation and differentiation in thymus and fetal liver.

The protein resides in the nucleus. The protein localises to the cytoplasm. Functionally, plays a role in T-cell signaling pathway. Isoform 2 may play a role in T-helper 2 (Th2) signaling pathway and seems to represent the first proximal signaling protein that links T-cell receptor-mediated signal to the activation of c-Maf Th2 specific factor. This is C-Maf-inducing protein (CMIP) from Homo sapiens (Human).